We begin with the raw amino-acid sequence, 295 residues long: MSDISPQDQARILSEALPHMQQYDEETIVIKYGGHAMGEEHLAREFARDIVLLEQTAINPVVVHGGGPQIATMLGRLGIKSEFAAGLRITDASAIEIVEMVLAGSINKQIVSHINAAGGKAVGLSGKDGNMVTAVKATRTMIDPDSNIEKVIDLGFVGEPDKVDLALLNQLIGHELIPVLAPLAVSTDGQTYNVNADTFAGAVAGALRAKRLLLLTDVAGVLDKSKKLIPELSIKDARRLIADGTISGGMIPKVETCIYALEAGVEGVVILDGKTPHAVLLELFTNQGTGTLIYK.

Residues 66-67 (GG), R88, and N193 contribute to the substrate site.

This sequence belongs to the acetylglutamate kinase family. ArgB subfamily.

It is found in the cytoplasm. It carries out the reaction N-acetyl-L-glutamate + ATP = N-acetyl-L-glutamyl 5-phosphate + ADP. The protein operates within amino-acid biosynthesis; L-arginine biosynthesis; N(2)-acetyl-L-ornithine from L-glutamate: step 2/4. Functionally, catalyzes the ATP-dependent phosphorylation of N-acetyl-L-glutamate. In Afipia carboxidovorans (strain ATCC 49405 / DSM 1227 / KCTC 32145 / OM5) (Oligotropha carboxidovorans), this protein is Acetylglutamate kinase.